A 244-amino-acid polypeptide reads, in one-letter code: Ferric aerobactin reductase IutB (244 aa).

[2Fe-2S] cluster-binding residues include Cys220, Cys221, Cys232, and Cys235.

As to quaternary structure, monomer. [2Fe-2S] cluster serves as cofactor.

Its subcellular location is the cytoplasm. The enzyme catalyses 2 a Fe(II)-siderophore + NAD(+) + H(+) = 2 a Fe(III)-siderophore + NADH. The catalysed reaction is 2 a Fe(II)-siderophore + NADP(+) + H(+) = 2 a Fe(III)-siderophore + NADPH. Its function is as follows. Ferric-siderophore reductase involved in iron removal from the siderophores after their transport into the cell. Acts as a major ferric-aerobactin reductase catalyzing the reduction of Fe(3+)-aerobactin, a citrate-hydroxamate siderophore produced by other bacteria. Catalyzes reduction of Fe(3+)-vulnibactin, a catecholate siderophore synthesized by V.vulnificus, in the absence of VuuB. Catalyzes reduction of ferrioxamine B and Fe(3+)-vibriobactin in vitro. No activity with Fe(3+)-enterobactin. Catalyzes reduction of ferric chelating compound Fe(3+)-nitrilotriacetic acid (NTA) in the presence of NADH, NADPH or reduced glutathione (GSH) as its electron donor in vitro. Also catalyzes reduction of ferric chelating compounds Fe(3+)-citrate and Fe(3+)-EDTA as well as non-complexed FeCl3 in the presence of GSH as its electron donor in vitro. Highest activity with Fe(3+)-NTA as electron acceptor and GSH as donor. The chain is Ferric aerobactin reductase IutB from Vibrio vulnificus.